A 223-amino-acid chain; its full sequence is MEVKDILKTVDHTLLATTATWPEIQTILDDAMAYETASACIPASYVKKAAEYVSGKLAICTVIGFPNGYSTTAAKVFECEDAIQNGADEIDMVINLTDVKNGDFDTVEEEIRQIKAKCQDHILKVIVETCQLTKEELIELCGVVTRSGADFIKTSTGFSTAGATFEDVEVMAKYVGEGVKIKAAGGISSLEDAKTFIALGASRLGTSRIIKIVKNEATKTDSY.

Residue Asp-91 is the Proton donor/acceptor of the active site. Lys-153 serves as the catalytic Schiff-base intermediate with acetaldehyde. Lys-182 (proton donor/acceptor) is an active-site residue.

The protein belongs to the DeoC/FbaB aldolase family. DeoC type 1 subfamily.

Its subcellular location is the cytoplasm. It carries out the reaction 2-deoxy-D-ribose 5-phosphate = D-glyceraldehyde 3-phosphate + acetaldehyde. It participates in carbohydrate degradation; 2-deoxy-D-ribose 1-phosphate degradation; D-glyceraldehyde 3-phosphate and acetaldehyde from 2-deoxy-alpha-D-ribose 1-phosphate: step 2/2. In terms of biological role, catalyzes a reversible aldol reaction between acetaldehyde and D-glyceraldehyde 3-phosphate to generate 2-deoxy-D-ribose 5-phosphate. This Streptococcus pyogenes serotype M2 (strain MGAS10270) protein is Deoxyribose-phosphate aldolase.